Reading from the N-terminus, the 416-residue chain is Keratin, type I cuticular Ha1 (416 aa).

The tract at residues 1 to 56 (MPYNFCLPSLSCRTSCSSRPCVPPSCHSCTLPGACNIPANVSNCNWFCEGSFNGSE) is head. The IF rod domain maps to 56–367 (EKETMQFLND…SLLESEDCNL (312 aa)). The tract at residues 57–91 (KETMQFLNDRLASYLEKVRQLERDNAELENLIRER) is coil 1A. Residues 92–102 (SQQQEPLLCPS) form a linker 1 region. Residues 103-203 (YQSYFKTIEE…HEQEVNTLRC (101 aa)) form a coil 1B region. The segment at 204–219 (QLGDRLNVEVDAAPTV) is linker 12. The coil 2 stretch occupies residues 220–363 (DLNRVLNETR…NTYRSLLESE (144 aa)). A tail region spans residues 364–416 (DCNLPSNPCATTNACSKPIGPCLSNPCTPCVPPAPCTPCAPRPRCGPCNSFVR).

Belongs to the intermediate filament family.

This Pan troglodytes (Chimpanzee) protein is Keratin, type I cuticular Ha1 (KRT31).